Consider the following 277-residue polypeptide: MVTTSPPPTLTNSVQPHPTTTTTTTLLPVTNLIPIILVSVFIALLLIFLLSRTSKKQPDPYLGVMSAISKHIRKKKAIALVFYIDTTDQRIKIYPVFQKVGNVLIYLNENGETNFSVIDPKTKPLQIKVGNISYPVYFAIAGNTIKYLAKFEDLETGVKYDNISIDDPRLIEILSKITGDVTSTYYITPTKKLTILASPEAIASVTIKRLWSPIENSIITIKEINENLTKLMEISARVLGLRLNTRLTLILMLIAVFLIFMVLIGTGIVHFPPPPTK.

The segment at 1-20 (MVTTSPPPTLTNSVQPHPTT) is disordered.

This is an uncharacterized protein from Acidianus convivator (ATV).